Here is a 423-residue protein sequence, read N- to C-terminus: Serine--tRNA ligase (423 aa).

Position 229–231 (229–231 (TAE)) interacts with L-serine. ATP is bound at residue 260-262 (RKE). Residue Glu283 coordinates L-serine. 347 to 350 (EISS) is a binding site for ATP. Residue Ser383 coordinates L-serine.

The protein belongs to the class-II aminoacyl-tRNA synthetase family. Type-1 seryl-tRNA synthetase subfamily. Homodimer. The tRNA molecule binds across the dimer.

It is found in the cytoplasm. The enzyme catalyses tRNA(Ser) + L-serine + ATP = L-seryl-tRNA(Ser) + AMP + diphosphate + H(+). It carries out the reaction tRNA(Sec) + L-serine + ATP = L-seryl-tRNA(Sec) + AMP + diphosphate + H(+). It functions in the pathway aminoacyl-tRNA biosynthesis; selenocysteinyl-tRNA(Sec) biosynthesis; L-seryl-tRNA(Sec) from L-serine and tRNA(Sec): step 1/1. Its function is as follows. Catalyzes the attachment of serine to tRNA(Ser). Is also able to aminoacylate tRNA(Sec) with serine, to form the misacylated tRNA L-seryl-tRNA(Sec), which will be further converted into selenocysteinyl-tRNA(Sec). The polypeptide is Serine--tRNA ligase (Syntrophotalea carbinolica (strain DSM 2380 / NBRC 103641 / GraBd1) (Pelobacter carbinolicus)).